The primary structure comprises 86 residues: Small ribosomal subunit protein uS17 (86 aa).

The protein belongs to the universal ribosomal protein uS17 family. As to quaternary structure, part of the 30S ribosomal subunit.

One of the primary rRNA binding proteins, it binds specifically to the 5'-end of 16S ribosomal RNA. This is Small ribosomal subunit protein uS17 from Streptococcus thermophilus (strain CNRZ 1066).